A 429-amino-acid polypeptide reads, in one-letter code: Serine--tRNA ligase (429 aa).

235-237 (TAE) lines the L-serine pocket. 266-268 (RSE) serves as a coordination point for ATP. E289 provides a ligand contact to L-serine. 353–356 (EISS) contributes to the ATP binding site. S389 contacts L-serine.

Belongs to the class-II aminoacyl-tRNA synthetase family. Type-1 seryl-tRNA synthetase subfamily. In terms of assembly, homodimer. The tRNA molecule binds across the dimer.

The protein resides in the cytoplasm. The enzyme catalyses tRNA(Ser) + L-serine + ATP = L-seryl-tRNA(Ser) + AMP + diphosphate + H(+). The catalysed reaction is tRNA(Sec) + L-serine + ATP = L-seryl-tRNA(Sec) + AMP + diphosphate + H(+). It functions in the pathway aminoacyl-tRNA biosynthesis; selenocysteinyl-tRNA(Sec) biosynthesis; L-seryl-tRNA(Sec) from L-serine and tRNA(Sec): step 1/1. Functionally, catalyzes the attachment of serine to tRNA(Ser). Is also able to aminoacylate tRNA(Sec) with serine, to form the misacylated tRNA L-seryl-tRNA(Sec), which will be further converted into selenocysteinyl-tRNA(Sec). This is Serine--tRNA ligase from Histophilus somni (strain 129Pt) (Haemophilus somnus).